Consider the following 475-residue polypeptide: Eukaryotic translation initiation factor 3 subunit L (475 aa).

Residues aspartate 257 to leucine 451 form the PCI domain.

It belongs to the eIF-3 subunit L family. In terms of assembly, component of the eukaryotic translation initiation factor 3 (eIF-3) complex.

The protein localises to the cytoplasm. Component of the eukaryotic translation initiation factor 3 (eIF-3) complex, which is involved in protein synthesis of a specialized repertoire of mRNAs and, together with other initiation factors, stimulates binding of mRNA and methionyl-tRNAi to the 40S ribosome. The eIF-3 complex specifically targets and initiates translation of a subset of mRNAs involved in cell proliferation. This is Eukaryotic translation initiation factor 3 subunit L from Sclerotinia sclerotiorum (strain ATCC 18683 / 1980 / Ss-1) (White mold).